We begin with the raw amino-acid sequence, 148 residues long: Large ribosomal subunit protein bL9 (148 aa).

This sequence belongs to the bacterial ribosomal protein bL9 family.

Binds to the 23S rRNA. In Hahella chejuensis (strain KCTC 2396), this protein is Large ribosomal subunit protein bL9.